Here is a 353-residue protein sequence, read N- to C-terminus: MIMKVVVKVGSNLLVGSSGLRKSYIAELCREVARLKSQGHEISIITSGARAAGFTYLGKGKRTQDLHIKQALCAVGQVQLMKVYENAFDFYGIKIAQILLTRDTFSNRKRYLNLRNTLIGLSEFDVVPIVNENDTVATEEITLGDNDTLAAMFSIAWDADFLVLFTTVDGVIDENGKLVERFDESVKLKDMGKSSWGTGGIRSKIESALMASRCGVKATICSGNDVSNLTRFVKGEPVGTVFEPQGRLKAKKAWIAFLSEPAGKIYVNKGAEEALKSGNSLLPVGVTGVEGTFDVGDVVEIVNEEGELVGRGIVNYSSSDLEKIAGHKSSDLKKILGYEGNKVVVHIDNMWVA.

Position 8 (lysine 8) interacts with ATP. Substrate is bound by residues serine 47, aspartate 134, and asparagine 146. Threonine 198–lysine 204 lines the ATP pocket. One can recognise a PUA domain in the interval alanine 262–glutamate 339.

This sequence belongs to the glutamate 5-kinase family.

The protein resides in the cytoplasm. The catalysed reaction is L-glutamate + ATP = L-glutamyl 5-phosphate + ADP. It participates in amino-acid biosynthesis; L-proline biosynthesis; L-glutamate 5-semialdehyde from L-glutamate: step 1/2. Catalyzes the transfer of a phosphate group to glutamate to form L-glutamate 5-phosphate. This is Glutamate 5-kinase from Thermotoga maritima (strain ATCC 43589 / DSM 3109 / JCM 10099 / NBRC 100826 / MSB8).